Consider the following 395-residue polypeptide: MNNVHELQFLKEKIQELKNDGVYRKLPILEGPNEAEIMLNGKKVINLSSNNYLGFANHPQIKKAAIDAVEKYGVGAGAVRTIVGNMDIHEELERVLAEFKREEAVMVFQSGFNCNAGTIQAVTEKGDLIISDQLNHASIIDGARLSRADKTVFKHADMDNLEQVLKENQDKYRNKLIITDGVFSMDGDIAPLPDIVELAEKYGAMTYVDDAHGSGVLGENGRGTVDHFGLHGRVDFTIGTLSKAIGVIGGYVAGSHTMKEWLSHRGRPLLFSTSLPPAAVGSIIEAVKLLMSTTEYTDRLWDNAKYFKEKISQLGFDIGHSGTPITPVIIGEEGKAMAFSKKLLENGVFVSGIIFPTVAKGTGRVRCMVTAGHTKEQLDRAVEVFKKVGQEMDLL.

Arg-24 serves as a coordination point for substrate. A pyridoxal 5'-phosphate-binding site is contributed by 111–112 (GF). His-136 lines the substrate pocket. Residues Ser-184, 209 to 212 (DDAH), and 240 to 243 (TLSK) contribute to the pyridoxal 5'-phosphate site. The residue at position 243 (Lys-243) is an N6-(pyridoxal phosphate)lysine. Thr-357 serves as a coordination point for substrate.

It belongs to the class-II pyridoxal-phosphate-dependent aminotransferase family. BioF subfamily. Homodimer. It depends on pyridoxal 5'-phosphate as a cofactor.

The enzyme catalyses 6-carboxyhexanoyl-[ACP] + L-alanine + H(+) = (8S)-8-amino-7-oxononanoate + holo-[ACP] + CO2. The protein operates within cofactor biosynthesis; biotin biosynthesis. In terms of biological role, catalyzes the decarboxylative condensation of pimeloyl-[acyl-carrier protein] and L-alanine to produce 8-amino-7-oxononanoate (AON), [acyl-carrier protein], and carbon dioxide. The sequence is that of 8-amino-7-oxononanoate synthase from Alkaliphilus metalliredigens (strain QYMF).